Reading from the N-terminus, the 497-residue chain is UDP-N-acetylmuramoyl-L-alanyl-D-glutamate--2,6-diaminopimelate ligase (497 aa).

Serine 32 contacts UDP-N-acetyl-alpha-D-muramoyl-L-alanyl-D-glutamate. ATP is bound at residue 113–119; it reads GTNGKTT. UDP-N-acetyl-alpha-D-muramoyl-L-alanyl-D-glutamate-binding positions include 155-156, serine 182, glutamine 188, and arginine 190; that span reads TT. An N6-carboxylysine modification is found at lysine 222. Meso-2,6-diaminopimelate contacts are provided by residues arginine 385, 409 to 412, glycine 460, and glutamate 464; that span reads DNPR. The Meso-diaminopimelate recognition motif motif lies at 409 to 412; it reads DNPR.

It belongs to the MurCDEF family. MurE subfamily. Mg(2+) serves as cofactor. In terms of processing, carboxylation is probably crucial for Mg(2+) binding and, consequently, for the gamma-phosphate positioning of ATP.

It localises to the cytoplasm. The enzyme catalyses UDP-N-acetyl-alpha-D-muramoyl-L-alanyl-D-glutamate + meso-2,6-diaminopimelate + ATP = UDP-N-acetyl-alpha-D-muramoyl-L-alanyl-gamma-D-glutamyl-meso-2,6-diaminopimelate + ADP + phosphate + H(+). The protein operates within cell wall biogenesis; peptidoglycan biosynthesis. Catalyzes the addition of meso-diaminopimelic acid to the nucleotide precursor UDP-N-acetylmuramoyl-L-alanyl-D-glutamate (UMAG) in the biosynthesis of bacterial cell-wall peptidoglycan. This chain is UDP-N-acetylmuramoyl-L-alanyl-D-glutamate--2,6-diaminopimelate ligase, found in Thermosynechococcus vestitus (strain NIES-2133 / IAM M-273 / BP-1).